A 156-amino-acid chain; its full sequence is MSRRNAAVKRPVLPDPQFNSRLASMMISRLMKHGKKSTAQKILSDAFSLISERTGGNAVELFETAVKNATPLVEVRARRVGGATYQVPMEVRQERGTAMALRWLVTFSRGRNGKSMSQKLAGELMDAANETGSAVKKREDTHKMAEANKAFAHYRY.

Belongs to the universal ribosomal protein uS7 family. In terms of assembly, part of the 30S ribosomal subunit. Contacts proteins S9 and S11.

One of the primary rRNA binding proteins, it binds directly to 16S rRNA where it nucleates assembly of the head domain of the 30S subunit. Is located at the subunit interface close to the decoding center, probably blocks exit of the E-site tRNA. This is Small ribosomal subunit protein uS7 from Prochlorococcus marinus subsp. pastoris (strain CCMP1986 / NIES-2087 / MED4).